Consider the following 341-residue polypeptide: Anthranilate phosphoribosyltransferase (341 aa).

Residues Gly79, 82–83 (GD), Thr87, 89–92 (NIST), 107–115 (KHGNRAASS), and Ala119 contribute to the 5-phospho-alpha-D-ribose 1-diphosphate site. Gly79 provides a ligand contact to anthranilate. Ser91 is a Mg(2+) binding site. Anthranilate is bound at residue Asn110. Arg165 is a binding site for anthranilate. Mg(2+)-binding residues include Asp224 and Glu225.

The protein belongs to the anthranilate phosphoribosyltransferase family. Homodimer. Mg(2+) serves as cofactor.

It carries out the reaction N-(5-phospho-beta-D-ribosyl)anthranilate + diphosphate = 5-phospho-alpha-D-ribose 1-diphosphate + anthranilate. It participates in amino-acid biosynthesis; L-tryptophan biosynthesis; L-tryptophan from chorismate: step 2/5. Functionally, catalyzes the transfer of the phosphoribosyl group of 5-phosphorylribose-1-pyrophosphate (PRPP) to anthranilate to yield N-(5'-phosphoribosyl)-anthranilate (PRA). The chain is Anthranilate phosphoribosyltransferase from Lacticaseibacillus paracasei (strain ATCC 334 / BCRC 17002 / CCUG 31169 / CIP 107868 / KCTC 3260 / NRRL B-441) (Lactobacillus paracasei).